The chain runs to 232 residues: Ribonuclease 3 (232 aa).

The region spanning 10-135 (ALKIYEATGY…LIGAMYMDGG (126 aa)) is the RNase III domain. Glutamate 48 is a Mg(2+) binding site. Residue aspartate 52 is part of the active site. Mg(2+) contacts are provided by asparagine 121 and glutamate 124. The active site involves glutamate 124. The 70-residue stretch at 161 to 230 (DPKTALQEWV…AKLMLKKITE (70 aa)) folds into the DRBM domain.

This sequence belongs to the ribonuclease III family. As to quaternary structure, homodimer. The cofactor is Mg(2+).

The protein localises to the cytoplasm. It carries out the reaction Endonucleolytic cleavage to 5'-phosphomonoester.. Its function is as follows. Digests double-stranded RNA. Involved in the processing of primary rRNA transcript to yield the immediate precursors to the large and small rRNAs (23S and 16S). Processes some mRNAs, and tRNAs when they are encoded in the rRNA operon. Processes pre-crRNA and tracrRNA of type II CRISPR loci if present in the organism. This chain is Ribonuclease 3, found in Anaplasma marginale (strain Florida).